A 274-amino-acid chain; its full sequence is tRNA pseudouridine synthase A (274 aa).

D51 serves as the catalytic Nucleophile. Position 109 (Y109) interacts with substrate.

Belongs to the tRNA pseudouridine synthase TruA family. As to quaternary structure, homodimer.

The enzyme catalyses uridine(38/39/40) in tRNA = pseudouridine(38/39/40) in tRNA. Its function is as follows. Formation of pseudouridine at positions 38, 39 and 40 in the anticodon stem and loop of transfer RNAs. The protein is tRNA pseudouridine synthase A of Acidovorax sp. (strain JS42).